The following is a 155-amino-acid chain: Ribosomal RNA large subunit methyltransferase H (155 aa).

S-adenosyl-L-methionine-binding positions include Leu72, Gly103, and 122 to 127 (LSALTL).

Belongs to the RNA methyltransferase RlmH family. In terms of assembly, homodimer.

It is found in the cytoplasm. It carries out the reaction pseudouridine(1915) in 23S rRNA + S-adenosyl-L-methionine = N(3)-methylpseudouridine(1915) in 23S rRNA + S-adenosyl-L-homocysteine + H(+). Specifically methylates the pseudouridine at position 1915 (m3Psi1915) in 23S rRNA. This chain is Ribosomal RNA large subunit methyltransferase H, found in Cronobacter sakazakii (strain ATCC BAA-894) (Enterobacter sakazakii).